The primary structure comprises 209 residues: ATP synthase subunit b', chloroplastic (209 aa).

A chloroplast-targeting transit peptide spans 1-62 (MASLLARPQQ…NALMAMPAAA (62 aa)). Residues 67-87 (IFDFNLTLPVMAGEFLLLMVF) traverse the membrane as a helical segment.

Belongs to the ATPase B chain family. As to quaternary structure, F-type ATPases have 2 components, F(1) - the catalytic core - and F(0) - the membrane proton channel. F(1) has five subunits: alpha(3), beta(3), gamma(1), delta(1), epsilon(1). F(0) has four main subunits: a(1), b(1), b'(1) and c(10-14). The alpha and beta chains form an alternating ring which encloses part of the gamma chain. F(1) is attached to F(0) by a central stalk formed by the gamma and epsilon chains, while a peripheral stalk is formed by the delta, b and b' chains.

It localises to the plastid. It is found in the chloroplast thylakoid membrane. F(1)F(0) ATP synthase produces ATP from ADP in the presence of a proton or sodium gradient. F-type ATPases consist of two structural domains, F(1) containing the extramembraneous catalytic core and F(0) containing the membrane proton channel, linked together by a central stalk and a peripheral stalk. During catalysis, ATP synthesis in the catalytic domain of F(1) is coupled via a rotary mechanism of the central stalk subunits to proton translocation. Its function is as follows. Component of the F(0) channel, it forms part of the peripheral stalk, linking F(1) to F(0). The b'-subunit is a diverged and duplicated form of b found in plants and photosynthetic bacteria. The chain is ATP synthase subunit b', chloroplastic from Chlamydomonas reinhardtii (Chlamydomonas smithii).